The following is a 465-amino-acid chain: CUGBP Elav-like family member 3 (465 aa).

RRM domains follow at residues 7-88 (IKLF…PADS) and 95-175 (RKLF…FADT). The span at 346–359 (PPALVAQQPPPPPQ) shows a compositional bias: pro residues. The interval 346–379 (PPALVAQQPPPPPQQQQQQQQQQQQQQQREGPDG) is disordered. Positions 360–373 (QQQQQQQQQQQQQQ) are enriched in low complexity. One can recognise an RRM 3 domain in the interval 380–458 (CNIFIYHLPQ…KRLKVQLKRP (79 aa)).

The protein belongs to the CELF/BRUNOL family. As to expression, expressed in brain.

The protein resides in the nucleus. Its subcellular location is the cytoplasm. In terms of biological role, RNA-binding protein involved in the regulation of pre-mRNA alternative splicing. Mediates exon inclusion and/or exclusion in pre-mRNA that are subject to tissue-specific and developmentally regulated alternative splicing. Specifically activates exon 5 inclusion of cardiac isoforms of TNNT2 during heart remodeling at the juvenile to adult transition. Activates the splicing of MAPT/Tau exon 10. Binds to muscle-specific splicing enhancer (MSE) intronic sites flanking the alternative exon 5 of TNNT2 pre-mRNA. The sequence is that of CUGBP Elav-like family member 3 (CELF3) from Homo sapiens (Human).